A 283-amino-acid polypeptide reads, in one-letter code: ATP phosphoribosyltransferase (283 aa).

Belongs to the ATP phosphoribosyltransferase family. Long subfamily. Mg(2+) is required as a cofactor.

It localises to the cytoplasm. The enzyme catalyses 1-(5-phospho-beta-D-ribosyl)-ATP + diphosphate = 5-phospho-alpha-D-ribose 1-diphosphate + ATP. It participates in amino-acid biosynthesis; L-histidine biosynthesis; L-histidine from 5-phospho-alpha-D-ribose 1-diphosphate: step 1/9. Feedback inhibited by histidine. Catalyzes the condensation of ATP and 5-phosphoribose 1-diphosphate to form N'-(5'-phosphoribosyl)-ATP (PR-ATP). Has a crucial role in the pathway because the rate of histidine biosynthesis seems to be controlled primarily by regulation of HisG enzymatic activity. The protein is ATP phosphoribosyltransferase of Azobacteroides pseudotrichonymphae genomovar. CFP2.